A 124-amino-acid polypeptide reads, in one-letter code: Small ribosomal subunit protein uS13 (124 aa).

The disordered stretch occupies residues 94 to 124; that stretch reads GLPLRGQRTKNNSRTRKGKRKTVANKKKATK. The segment covering 100-124 has biased composition (basic residues); it reads QRTKNNSRTRKGKRKTVANKKKATK.

It belongs to the universal ribosomal protein uS13 family. In terms of assembly, part of the 30S ribosomal subunit. Forms a loose heterodimer with protein S19. Forms two bridges to the 50S subunit in the 70S ribosome.

Functionally, located at the top of the head of the 30S subunit, it contacts several helices of the 16S rRNA. In the 70S ribosome it contacts the 23S rRNA (bridge B1a) and protein L5 of the 50S subunit (bridge B1b), connecting the 2 subunits; these bridges are implicated in subunit movement. Contacts the tRNAs in the A and P-sites. The polypeptide is Small ribosomal subunit protein uS13 (Flavobacterium johnsoniae (strain ATCC 17061 / DSM 2064 / JCM 8514 / BCRC 14874 / CCUG 350202 / NBRC 14942 / NCIMB 11054 / UW101) (Cytophaga johnsonae)).